Here is a 256-residue protein sequence, read N- to C-terminus: Major prion protein (256 aa).

The N-terminal stretch at 1–24 (MVKSHIGSWILVLFVAMWSDVGLC) is a signal peptide. Residues 25 to 41 (KKRPKPGGGWNTGGSRY) are interaction with ADGRG6. The interaction with GRB2, ERI3 and SYN1 stretch occupies residues 25–233 (KKRPKPGGGW…ESEAYYQRRA (209 aa)). Positions 28–110 (PKPGGGWNTG…QWNKPSKPKT (83 aa)) are disordered. Tandem repeats lie at residues 54–62 (PQGGGGWGQ), 63–70 (PHGGGWGQ), 71–78 (PHGGGWGQ), 79–86 (PHGGGWGQ), and 87–95 (PHGGGGWGQ). Residues 54–95 (PQGGGGWGQPHGGGWGQPHGGGWGQPHGGGWGQPHGGGGWGQ) form a 5 X 8 AA tandem repeats of P-H-G-G-G-W-G-Q region. Gly residues predominate over residues 55–97 (QGGGGWGQPHGGGWGQPHGGGWGQPHGGGWGQPHGGGGWGQGG). Cu(2+) contacts are provided by H64, G65, G66, H72, G73, G74, H80, G81, G82, H88, G90, and G91. A disulfide bridge connects residues C182 and C217. 2 N-linked (GlcNAc...) asparagine glycosylation sites follow: N184 and N200. A233 carries GPI-anchor amidated alanine lipidation. Positions 234 to 256 (SAILFSSPPVILLISFLIFLIVG) are cleaved as a propeptide — removed in mature form.

The protein belongs to the prion family. As to quaternary structure, monomer and homodimer. Has a tendency to aggregate into amyloid fibrils containing a cross-beta spine, formed by a steric zipper of superposed beta-strands. Soluble oligomers may represent an intermediate stage on the path to fibril formation. Copper binding may promote oligomerization. Interacts with GRB2, APP, ERI3/PRNPIP and SYN1. Mislocalized cytosolically exposed PrP interacts with MGRN1; this interaction alters MGRN1 subcellular location and causes lysosomal enlargement. Interacts with APP. Interacts with KIAA1191. Interacts with ADGRG6.

The protein localises to the cell membrane. The protein resides in the golgi apparatus. In terms of biological role, its primary physiological function is unclear. May play a role in neuronal development and synaptic plasticity. May be required for neuronal myelin sheath maintenance. May promote myelin homeostasis through acting as an agonist for ADGRG6 receptor. May play a role in iron uptake and iron homeostasis. Soluble oligomers are toxic to cultured neuroblastoma cells and induce apoptosis (in vitro). Association with GPC1 (via its heparan sulfate chains) targets PRNP to lipid rafts. Also provides Cu(2+) or Zn(2+) for the ascorbate-mediated GPC1 deaminase degradation of its heparan sulfate side chains. The polypeptide is Major prion protein (PRNP) (Felis catus (Cat)).